Here is a 1138-residue protein sequence, read N- to C-terminus: Eukaryotic translation initiation factor 3 subunit A (1138 aa).

The PCI domain maps to Leu-319 to Thr-502. Disordered regions lie at residues Asn-590 to Gln-633 and Glu-817 to Arg-1138. Basic and acidic residues-rich tracts occupy residues Glu-817 to Arg-903, Asp-923 to Asp-967, Gly-1003 to Gln-1049, and Asp-1058 to Arg-1078. Residues Pro-1082 to Asn-1100 are compositionally biased toward gly residues. The span at Pro-1107–Asp-1128 shows a compositional bias: basic and acidic residues.

This sequence belongs to the eIF-3 subunit A family. As to quaternary structure, component of the eukaryotic translation initiation factor 3 (eIF-3) complex. The eIF-3 complex interacts with pix.

It localises to the cytoplasm. Functionally, RNA-binding component of the eukaryotic translation initiation factor 3 (eIF-3) complex, which is involved in protein synthesis of a specialized repertoire of mRNAs and, together with other initiation factors, stimulates binding of mRNA and methionyl-tRNAi to the 40S ribosome. The eIF-3 complex specifically targets and initiates translation of a subset of mRNAs involved in cell proliferation. The sequence is that of Eukaryotic translation initiation factor 3 subunit A from Drosophila virilis (Fruit fly).